Consider the following 502-residue polypeptide: MGFEDDPYRDVDGEPIVDFDDFGNDREPSTEPLQDFDEDLADDIGDWDGEGSQTPVYDNDKVAKPRKRLVKKSSSERVTIDVPELIDEDVDDAEFDEFMGGRGGGSTDYDDKVGRKRKKEKERSSSGSGKEKRHKFPNRGERKSEEIDEMWKSIAHNPENDEEGVRTMDDDNFIDDTGLDPSERYGGDAGDRSPTHYPQAEEGEDEDEVNNLFKMGKKKKKTERNPAEIALLVENVMAELEVTAEEDAELNRQGKPAINKLKKLSLLTDVLGKKQLQTEFLDHGVLTLLKNWLEPLPDGSLPNINIRAAILRVLTDFPIDLDQYDRREQLKKSGLGKVIMFLSKSDEETNSNRRLAKDLVDKWSRPIFNKSTRFEDMRNLDEDRVPYRRPPVKKPSNKATMESRDGDFDLEIRERKTGLTSGQSSRGDRQMTMRPEATPLDFLIRPQSKIDPDEIIARAKQVSQDQRRVKMNKKLQQLKGTKKKRLQATKVSVEGRGMIKYL.

The span at 1–12 (MGFEDDPYRDVD) shows a compositional bias: basic and acidic residues. 2 disordered regions span residues 1–61 (MGFE…DNDK) and 87–208 (DEDV…DEDE). Acidic residues-rich tracts occupy residues 13 to 22 (GEPIVDFDDF), 34 to 49 (QDFD…DWDG), and 87 to 97 (DEDVDDAEFDE). 2 stretches are compositionally biased toward basic and acidic residues: residues 138 to 151 (NRGE…DEMW) and 181 to 194 (PSER…DRSP). Tyrosine 185 is subject to Phosphotyrosine. In terms of domain architecture, TFIIS N-terminal spans 287–370 (TLLKNWLEPL…DKWSRPIFNK (84 aa)). Positions 385 to 434 (VPYRRPPVKKPSNKATMESRDGDFDLEIRERKTGLTSGQSSRGDRQMTMR) are disordered. Positions 401–417 (MESRDGDFDLEIRERKT) are enriched in basic and acidic residues.

The protein belongs to the IWS1 family. As to quaternary structure, interacts with BZR2/BES1 and SPT6 (via N-terminus). Interacts with ASHH2/SDG8.

The protein localises to the nucleus. Functionally, transcription factor involved in RNA polymerase II (RNAPII) transcription regulation. Involved in transcription elongation. May function at post-recruitment and elongation steps of transcription. May be recruited by BZR2/BES1 to target genes and promote their expression during transcription elongation process. Required for brassinosteroid (BR)-induced gene expression. Required the for regulation of numerous nitrogen-responsive genes in roots. Acts in roots to repress NRT2.1 transcription in response to high nitrogen supply. This repression is associated with an IWS1-dependent increase of trimethylation on 'Lys-27' H3K27me3 at the NRT2.1 locus. The protein is Protein IWS1 homolog 1 of Arabidopsis thaliana (Mouse-ear cress).